A 1048-amino-acid chain; its full sequence is Probable inactive receptor kinase At5g10020 (1048 aa).

Residues 1 to 21 form the signal peptide; sequence MSHFLTFCFLSLLLLLHGANA. LRR repeat units follow at residues 100 to 120, 124 to 146, 148 to 169, 172 to 194, 196 to 217, 224 to 246, 250 to 272, 273 to 294, 298 to 319, 320 to 342, 365 to 387, 389 to 411, 412 to 433, 436 to 457, 469 to 491, 493 to 516, 517 to 539, and 540 to 560; these read RLRN…PSLG, SLQH…ISEL, SLNH…GFRN, QLRS…FTEL, NVEF…PMEN, TLRH…ESIG, NLEI…GSQP, SLRI…ELLQ, PLLE…INSS, TLTM…FKSC, TPDV…TSAF, RLSV…WGDS, QFSV…SFFT, SLRS…RGSR, QMEL…IGTM, KIKV…NKLS, GLLF…LPSQ, and MVGF…DLRS. The helical transmembrane segment at 602–622 threads the bilayer; that stretch reads IAIIVASVGAAIMILFVLFAY. The disordered stretch occupies residues 696 to 733; that stretch reads EQGAPATSAPTNLLDDYPAASGRKSSSGGSPLSSSPRF. Over residues 716 to 733 the composition is skewed to low complexity; sequence SGRKSSSGGSPLSSSPRF. Serine 744 carries the phosphoserine modification. Residues 768 to 1045 form the Protein kinase domain; the sequence is RAPAEVLGRS…IRQVLDHLTS (278 aa). Residues 774-782 and lysine 796 contribute to the ATP site; that span reads LGRSSHGTL.

It belongs to the protein kinase superfamily.

It is found in the membrane. This Arabidopsis thaliana (Mouse-ear cress) protein is Probable inactive receptor kinase At5g10020.